A 293-amino-acid chain; its full sequence is Ribosomal RNA small subunit methyltransferase A (293 aa).

The S-adenosyl-L-methionine site is built by N38, V40, G65, E86, D116, and N135.

Belongs to the class I-like SAM-binding methyltransferase superfamily. rRNA adenine N(6)-methyltransferase family. RsmA subfamily.

It localises to the cytoplasm. The catalysed reaction is adenosine(1518)/adenosine(1519) in 16S rRNA + 4 S-adenosyl-L-methionine = N(6)-dimethyladenosine(1518)/N(6)-dimethyladenosine(1519) in 16S rRNA + 4 S-adenosyl-L-homocysteine + 4 H(+). In terms of biological role, specifically dimethylates two adjacent adenosines (A1518 and A1519) in the loop of a conserved hairpin near the 3'-end of 16S rRNA in the 30S particle. May play a critical role in biogenesis of 30S subunits. In Nocardia farcinica (strain IFM 10152), this protein is Ribosomal RNA small subunit methyltransferase A.